The primary structure comprises 513 residues: ATP synthase subunit alpha (513 aa).

ATP is bound at residue 169–176; sequence GDRQTGKT.

This sequence belongs to the ATPase alpha/beta chains family. F-type ATPases have 2 components, CF(1) - the catalytic core - and CF(0) - the membrane proton channel. CF(1) has five subunits: alpha(3), beta(3), gamma(1), delta(1), epsilon(1). CF(0) has three main subunits: a(1), b(2) and c(9-12). The alpha and beta chains form an alternating ring which encloses part of the gamma chain. CF(1) is attached to CF(0) by a central stalk formed by the gamma and epsilon chains, while a peripheral stalk is formed by the delta and b chains.

It localises to the cell inner membrane. The enzyme catalyses ATP + H2O + 4 H(+)(in) = ADP + phosphate + 5 H(+)(out). In terms of biological role, produces ATP from ADP in the presence of a proton gradient across the membrane. The alpha chain is a regulatory subunit. This is ATP synthase subunit alpha from Shigella boydii serotype 18 (strain CDC 3083-94 / BS512).